Consider the following 539-residue polypeptide: Cytochrome P450 monooxygenase pvhE (539 aa).

Residues 15 to 31 traverse the membrane as a helical segment; that stretch reads VAFCSLVILCILFKVLT. N-linked (GlcNAc...) asparagine glycosylation is present at Asn-379. Cys-473 is a binding site for heme.

This sequence belongs to the cytochrome P450 family. Heme is required as a cofactor.

Its subcellular location is the membrane. It functions in the pathway secondary metabolite biosynthesis. In terms of biological role, cytochrome P450 monooxygenase; part of the gene cluster that mediates the biosynthesis of varicidin A, an antifungal natural product containing a cis-octahydrodecalin core. The PKS module of pvhA together with the enoylreductase pvhC catalyze the formation of the polyketide unit which is then conjugated to L-isoleucine by the condensation domain of the NRPS module. Activity of the Dieckmann cyclase domain (RED) of pvhA results in release of an acyclic tetramate. The cytochrome P450 monooxygenase pvhE then catalyzes the oxidation of the C21 methyl group to a to carboxylate group. The methyltransferase pvhD then further methylates the pvhE product. The Diels-Alderase pvhB is able to catalyze Diels-Alder cycloaddition using both pvhE and pvhD products as substrates to form the decalin ring, yielding varicidin B and A, respectively. This chain is Cytochrome P450 monooxygenase pvhE, found in Talaromyces variabilis (Penicillium variabile).